We begin with the raw amino-acid sequence, 116 residues long: Large ribosomal subunit protein bL19 (116 aa).

Belongs to the bacterial ribosomal protein bL19 family.

Its function is as follows. This protein is located at the 30S-50S ribosomal subunit interface and may play a role in the structure and function of the aminoacyl-tRNA binding site. The polypeptide is Large ribosomal subunit protein bL19 (Streptomyces griseus subsp. griseus (strain JCM 4626 / CBS 651.72 / NBRC 13350 / KCC S-0626 / ISP 5235)).